A 358-amino-acid chain; its full sequence is Serine/threonine-protein phosphatase 2A activator 2 (358 aa).

Interacts with the phosphatase PP2A catalytic subunits PPH21 and PPH22. Forms a ternary complex with PPH21-TAP42.

The protein resides in the cytoplasm. It catalyses the reaction [protein]-peptidylproline (omega=180) = [protein]-peptidylproline (omega=0). Its function is as follows. PPIases accelerate the folding of proteins. It catalyzes the cis-trans isomerization of proline imidic peptide bonds in oligopeptides. Acts as a regulatory subunit for TAP42-associated PP2A-like phosphatases modulating their activity or substrate specificity, probably by inducing a conformational change in the catalytic subunit, a direct target of the PPIase. Can reactivate inactive phosphatase PP2A-phosphatase methylesterase complexes (PP2Ai) in presence of ATP and Mg(2+) by dissociating the inactive form from the complex. Acts also inhibitory at high concentrations. Involved in the regulation of cell cycle progression, mitotic spindle formation and bud morphogenesis. This is Serine/threonine-protein phosphatase 2A activator 2 (RRD2) from Saccharomyces cerevisiae (strain ATCC 204508 / S288c) (Baker's yeast).